The sequence spans 599 residues: Purine-uracil permease NCS1 (599 aa).

Helical transmembrane passes span 140-160, 164-184, 218-238, 257-277, 293-313, 327-347, 363-383, 411-433, 445-465, 474-494, 525-545, and 560-580; these read LWIGLVVGVPTYYLAGSLVDL, WWQGIATVVTANLILLVPLVL, LVGCGWYGIETWIGGEAIFLL, TSPLEFSCFIVFWLAQLCIVW, ILISLTSCLLAWSYLKAGGFG, FWTLFFPSLTANISFWATLAL, IIGQVGLPVFMGLFTFVGVAV, TLLAIVGISLATLTTNIAANVVA, FFTFGRGAFLTAVLGIVFQPW, FVYTWLIGYSALLGPIGGIIL, YNVAAVVALVAGIIPVVPGFL, and VVYDNALFFSFIIAGFVYWII.

This sequence belongs to the purine-cytosine permease (2.A.39) family. Expressed in roots, leaves, stems, flowers, siliques and seeds.

The protein resides in the plastid. It is found in the chloroplast envelope. The protein localises to the chloroplast membrane. In terms of biological role, nucleobase-proton symporter that facilitates the uptake of nucleobases in the cells. Can transport adenine, guanine and uracil. Contributes to uracil import into plastids for plastidic uracil salvage which is essential for plant growth and development. This Arabidopsis thaliana (Mouse-ear cress) protein is Purine-uracil permease NCS1.